Consider the following 624-residue polypeptide: DNA mismatch repair protein MutL (624 aa).

The segment covering 340–355 (NKLDTDSHSQSHERGH) has biased composition (basic and acidic residues). The disordered stretch occupies residues 340–415 (NKLDTDSHSQ…RGGATSSYRQ (76 aa)). Polar residues-rich tracts occupy residues 372–383 (HQTAPSTKASTE) and 391–415 (SPISAVPSHTSDVQSRGGATSSYRQ).

The protein belongs to the DNA mismatch repair MutL/HexB family.

This protein is involved in the repair of mismatches in DNA. It is required for dam-dependent methyl-directed DNA mismatch repair. May act as a 'molecular matchmaker', a protein that promotes the formation of a stable complex between two or more DNA-binding proteins in an ATP-dependent manner without itself being part of a final effector complex. This Shewanella sediminis (strain HAW-EB3) protein is DNA mismatch repair protein MutL.